Reading from the N-terminus, the 453-residue chain is Plasmepsin II (453 aa).

Residues 1–37 (MDITVREHDFKHGFIKSNSTFDGLNIDNSKNKKKIQK) are Cytoplasmic-facing. Positions 1 to 124 (MDITVREHDF…SGLTKTNYLG (124 aa)) are excised as a propeptide. A helical; Signal-anchor for type II membrane protein membrane pass occupies residues 38-58 (GFQILYVLLFCSVMCGLFYYV). The Lumenal segment spans residues 59–453 (YENVWLQRDN…VGIALAKKNL (395 aa)). In terms of domain architecture, Peptidase A1 spans 140–447 (FYGDAEVGDN…DYDNQSVGIA (308 aa)). Residue D158 is part of the active site. A disulfide bond links C171 and C176. D338 is a catalytic residue. A disulfide bridge links C373 with C409.

This sequence belongs to the peptidase A1 family. Component of the hemozoin formation complex (HFC) composed of falcipains FP2A and/or FP2B, plasmepsins PMII, PMIII/HAP and PMIV, heme detoxifying protein HDP and falcilysin FLN. The HFC complex is involved in hemoglobin degradation and detoxification of heme in the food vacuole during the asexual blood stage. Post-translationally, not N-glycosylated. In terms of processing, proteolytically cleaved into the soluble active mature form in the digestive vacuole by cysteine protease falcipains; the process begins at the early ring stage. Proteolysis requires an acidic environment. In absence of falcipains, autoprocessing may serve as an alternate activation system.

The protein resides in the membrane. It localises to the vacuole lumen. Its subcellular location is the vacuole membrane. It catalyses the reaction Hydrolysis of the bonds linking certain hydrophobic residues in hemoglobin or globin. Also cleaves small molecules substrates such as Ala-Leu-Glu-Arg-Thr-Phe-|-Phe(NO2)-Ser-Phe-Pro-Thr.. Its activity is regulated as follows. Inhibited by pepstatin A. Inhibited by KNI derived compounds (KNI-10742, 10743, 10395, 10333, and 10343). During the asexual blood stage, participates in initial cleavage of native host hemoglobin (Hb) resulting in Hb denaturation. May cleave preferentially denatured hemoglobin that has been cleaved by PMI. Digestion of host Hb is an essential step which provides the parasite with amino acids for protein synthesis, and regulates osmolarity. This Plasmodium falciparum (isolate 3D7) protein is Plasmepsin II.